A 262-amino-acid chain; its full sequence is Homeobox-leucine zipper protein HOX24 (262 aa).

Disordered stretches follow at residues 44 to 68 and 162 to 189; these read AAGR…RKRR and LNER…NSVM. A compositionally biased stretch (gly residues) spans 46 to 62; sequence GRGGGDGDGGGGGGGGG. Residues 61 to 122 constitute a DNA-binding region (homeobox); that stretch reads GGGERKRRFT…NKRARWRSKQ (62 aa). The leucine-zipper stretch occupies residues 121–165; the sequence is KQIEHDYAALRAQYDALHARVESLRQEKLALAAQVDELRGKLNER.

It belongs to the HD-ZIP homeobox family. Class I subfamily. Expressed in roots and panicles.

Its subcellular location is the nucleus. Probable transcription factor. The protein is Homeobox-leucine zipper protein HOX24 (HOX24) of Oryza sativa subsp. indica (Rice).